Consider the following 131-residue polypeptide: Small ribosomal subunit protein uS8 (131 aa).

It belongs to the universal ribosomal protein uS8 family. Part of the 30S ribosomal subunit. Contacts proteins S5 and S12.

Its function is as follows. One of the primary rRNA binding proteins, it binds directly to 16S rRNA central domain where it helps coordinate assembly of the platform of the 30S subunit. The sequence is that of Small ribosomal subunit protein uS8 from Erythrobacter litoralis (strain HTCC2594).